A 430-amino-acid polypeptide reads, in one-letter code: Histidinol dehydrogenase (430 aa).

Positions 131, 192, and 215 each coordinate NAD(+). 3 residues coordinate substrate: Ser238, Gln260, and His263. Residues Gln260 and His263 each contribute to the Zn(2+) site. Catalysis depends on proton acceptor residues Glu328 and His329. Residues His329, Asp362, Glu416, and His421 each coordinate substrate. Asp362 lines the Zn(2+) pocket. His421 contacts Zn(2+).

Belongs to the histidinol dehydrogenase family. It depends on Zn(2+) as a cofactor.

It carries out the reaction L-histidinol + 2 NAD(+) + H2O = L-histidine + 2 NADH + 3 H(+). It participates in amino-acid biosynthesis; L-histidine biosynthesis; L-histidine from 5-phospho-alpha-D-ribose 1-diphosphate: step 9/9. In terms of biological role, catalyzes the sequential NAD-dependent oxidations of L-histidinol to L-histidinaldehyde and then to L-histidine. This Acinetobacter baylyi (strain ATCC 33305 / BD413 / ADP1) protein is Histidinol dehydrogenase.